Here is a 272-residue protein sequence, read N- to C-terminus: Alkaline ceramidase (272 aa).

A run of 2 helical transmembrane segments spans residues 34–54 and 61–81; these read FANTCTNLPIIVLPLVNIMLL and VNGGLIFPQLLLTFNGLASTY. His83 lines the Zn(2+) pocket. 4 helical membrane passes run 96–116, 124–144, 148–168, and 183–203; these read LSLVWIITVFLVVYIPVMKWF, LTLVRWVVLIVTALVSGLCFL, LNAIALMLFSIPAAVVINYEG, and ILALWGVAFSFWFADRLLCDF. Positions 213 and 217 each coordinate Zn(2+). The helical transmembrane segment at 214–234 threads the bilayer; it reads ALFHLLAGLAGYTIFIMFSMI. Asn256 carries N-linked (GlcNAc...) asparagine glycosylation.

It belongs to the alkaline ceramidase family. Zn(2+) serves as cofactor.

It localises to the membrane. It carries out the reaction an N-acyl-sphingoid base + H2O = a sphingoid base + a fatty acid. The catalysed reaction is an N-acylsphing-4-enine + H2O = sphing-4-enine + a fatty acid. The enzyme catalyses an N-acyl-15-methylhexadecasphing-4-enine + H2O = 15-methylhexadecasphing-4-enine + a fatty acid. Its pathway is lipid metabolism; sphingolipid metabolism. Its function is as follows. Hydrolyzes the sphingolipid ceramide into sphingoid base and free fatty acid. C.elegans contain specific sphingoid bases, which are unique or different in structure compared to the sphingoid bases found in other animals. Two examples of these distinctive compounds are: 15-methylhexadecasphinganine and 15-methylhexadecasphing-4-enine. This chain is Alkaline ceramidase, found in Caenorhabditis elegans.